Reading from the N-terminus, the 2671-residue chain is Stalled ribosome sensor GCN1 (2671 aa).

The residue at position 2 (Ala2) is an N-acetylalanine. HEAT repeat units follow at residues 140 to 178 (NKLV…ENPG), 257 to 293 (EFKD…LDLS), 294 to 331 (QYAM…QCSD), 385 to 423 (IVAE…EVPK), 425 to 459 (LTEW…GDTL), 460 to 503 (LQAL…SVAD), 560 to 597 (NKVQ…SLGG), 599 to 636 (KLAH…AGKA), 697 to 732 (DPEA…SLSV), and 733 to 770 (LSPD…QTPA). Ser729 carries the phosphoserine modification. Residue Ser786 is modified to Phosphoserine. Residues 804-863 (QIIELELKEEIKKKKGIKEEVQLTSKQKEMLQAQLDREAQVRRRLQELDGELEAALGLLD) adopt a coiled-coil conformation. HEAT repeat units lie at residues 879–925 (VLVD…HVTL), 979–1016 (SLVF…QAQL), 1035–1072 (LPRV…SSSG), 1078–1115 (FAEQ…VLPA), 1155–1192 (DLQP…RYQR), 1210–1250 (YRPP…YLDS), 1251–1289 (SQVK…THGK), 1290–1332 (ENVN…HLDK), 1335–1372 (PKVK…AIKE), 1374–1410 (AGGM…GLGI), 1413–1451 (LKQQ…MLGK), 1455–1492 (PYVV…NLSA), 1493–1530 (HGVK…CAPK), 1534–1571 (SCLP…VIRN), 1573–1609 (EILA…HFID), 1611–1648 (PSLA…LTDQ), 1653–1690 (PYLP…GMGE), 1692–1729 (CFED…GLGV), 1731–1769 (KLEK…TFGD), 1773–1810 (PYVG…MYAE), 1812–1848 (AIAL…HISG), 1921–1958 (EILP…KLGE), 1959–1996 (KILP…STSR), 2001–2038 (YFSE…TIGH), 2039–2076 (QALE…SRVV), 2078–2106 (PYLV…DALT), 2107–2146 (RHLG…VEDD), 2147–2184 (TGHR…RSKA), 2188–2225 (SHLR…KLDA), 2259–2296 (KGVT…LTSA), 2301–2338 (PSVV…AKVG), 2339–2380 (IALK…IHIK), 2382–2417 (DPLF…GAGA), 2422–2459 (VIRK…FLTE), 2546–2583 (QLPA…DPLP), and 2588–2625 (QAIK…MRQG). The interval 2260–2408 (GVTSILPVLR…GVRDTMLQAL (149 aa)) is RWDBD region. Residue Ser2276 is modified to Phosphoserine. Residues 2627-2661 (EVFQSLSKILDVASLEVLNEVNRRSLKKLASQADS) form an HEAT 47; degenerate repeat.

The protein belongs to the GCN1 family. Interacts with EIF2AK4/GCN2; this interaction stimulates the EIF2AK4/GCN2 kinase activity and is impaired by IMPACT upon a variety of stress conditions, such as amino acid depletion, UV-C irradiation, proteasome inhibitor treatment and glucose deprivation. Interacts with IMPACT; this prevents the interaction of GCN1 with EIF2AK4/GCN2 and inhibits EIF2AK4/GCN2 kinase activity. Interacts with RNF14; interaction takes place following ribosome stalling and promotes recruitment of RNF14. In terms of tissue distribution, ubiquitously expressed. Expressed in skeletal muscules, ovary and testis.

The protein resides in the cytoplasm. Its function is as follows. Ribosome collision sensor that plays a key role in the RNF14-RNF25 translation quality control pathway, a pathway that takes place when a ribosome has stalled during translation, and which promotes ubiquitination and degradation of translation factors on stalled ribosomes. Directly binds to the ribosome and acts as a sentinel for colliding ribosomes: activated following ribosome stalling and promotes recruitment of RNF14, which directly ubiquitinates EEF1A1/eEF1A, leading to its degradation. In addition to EEF1A1/eEF1A, the RNF14-RNF25 translation quality control pathway mediates degradation of ETF1/eRF1 and ubiquitination of ribosomal protein. GCN1 also acts as a positive activator of the integrated stress response (ISR) by mediating activation of EIF2AK4/GCN2 in response to amino acid starvation. Interaction with EIF2AK4/GCN2 on translating ribosomes stimulates EIF2AK4/GCN2 kinase activity, leading to phosphorylation of eukaryotic translation initiation factor 2 (eIF-2-alpha/EIF2S1). EIF2S1/eIF-2-alpha phosphorylation converts EIF2S1/eIF-2-alpha into a global protein synthesis inhibitor, leading to a global attenuation of cap-dependent translation, and thus to a reduced overall utilization of amino acids, while concomitantly initiating the preferential translation of ISR-specific mRNAs, such as the transcriptional activator ATF4, and hence allowing ATF4-mediated reprogramming of amino acid biosynthetic gene expression to alleviate nutrient depletion. This is Stalled ribosome sensor GCN1 from Homo sapiens (Human).